A 161-amino-acid polypeptide reads, in one-letter code: Nucleotide-binding protein Bamb_2603 (161 aa).

This sequence belongs to the YajQ family.

Nucleotide-binding protein. This Burkholderia ambifaria (strain ATCC BAA-244 / DSM 16087 / CCUG 44356 / LMG 19182 / AMMD) (Burkholderia cepacia (strain AMMD)) protein is Nucleotide-binding protein Bamb_2603.